Consider the following 689-residue polypeptide: Glycine--tRNA ligase beta subunit (689 aa).

The protein belongs to the class-II aminoacyl-tRNA synthetase family. As to quaternary structure, tetramer of two alpha and two beta subunits.

It localises to the cytoplasm. The catalysed reaction is tRNA(Gly) + glycine + ATP = glycyl-tRNA(Gly) + AMP + diphosphate. The sequence is that of Glycine--tRNA ligase beta subunit from Actinobacillus succinogenes (strain ATCC 55618 / DSM 22257 / CCUG 43843 / 130Z).